The chain runs to 250 residues: Sugar fermentation stimulation protein homolog (250 aa).

This sequence belongs to the SfsA family.

In Trichodesmium erythraeum (strain IMS101), this protein is Sugar fermentation stimulation protein homolog.